Here is a 206-residue protein sequence, read N- to C-terminus: Ectodysplasin-A receptor-associated adapter protein (206 aa).

2 disordered regions span residues 1 to 36 and 52 to 77; these read MRPL…DKYP and TLNC…TGDP. Polar residues-rich tracts occupy residues 24–33 and 52–62; these read PSTLSFNTSD and TLNCPPNSDMK. The Death domain maps to 114–190; sequence DVIRIKLDPC…DVEKVLRRWV (77 aa).

As to quaternary structure, self-associates and binds to EDAR, TRAF1, TRAF2 and TRAF3.

Its subcellular location is the cytoplasm. In terms of biological role, adapter protein that interacts with EDAR DEATH domain and couples the receptor to EDA signaling pathway during morphogenesis of ectodermal organs. Mediates the activation of NF-kappa-B. This is Ectodysplasin-A receptor-associated adapter protein (EDARADD) from Macaca fascicularis (Crab-eating macaque).